The chain runs to 201 residues: Putative tRNA-binding protein YtpR (201 aa).

The 111-residue stretch at 90–200 folds into the tRNA-binding domain; it reads VDLSPKFVVG…GDYEAGDAFQ (111 aa).

The protein is Putative tRNA-binding protein YtpR (ytpR) of Bacillus subtilis (strain 168).